A 333-amino-acid chain; its full sequence is Glycerol-3-phosphate dehydrogenase [NAD(P)+] (333 aa).

NADPH contacts are provided by Ser10, Trp11, and Lys105. The sn-glycerol 3-phosphate site is built by Lys105, Gly136, and Thr138. Ala140 serves as a coordination point for NADPH. Lys191, Asp244, Ser254, Arg255, and Asn256 together coordinate sn-glycerol 3-phosphate. Lys191 (proton acceptor) is an active-site residue. Arg255 serves as a coordination point for NADPH. The NADPH site is built by Val279 and Glu281.

It belongs to the NAD-dependent glycerol-3-phosphate dehydrogenase family.

The protein resides in the cytoplasm. It catalyses the reaction sn-glycerol 3-phosphate + NAD(+) = dihydroxyacetone phosphate + NADH + H(+). It carries out the reaction sn-glycerol 3-phosphate + NADP(+) = dihydroxyacetone phosphate + NADPH + H(+). It functions in the pathway membrane lipid metabolism; glycerophospholipid metabolism. Its function is as follows. Catalyzes the reduction of the glycolytic intermediate dihydroxyacetone phosphate (DHAP) to sn-glycerol 3-phosphate (G3P), the key precursor for phospholipid synthesis. This chain is Glycerol-3-phosphate dehydrogenase [NAD(P)+], found in Trichlorobacter lovleyi (strain ATCC BAA-1151 / DSM 17278 / SZ) (Geobacter lovleyi).